We begin with the raw amino-acid sequence, 193 residues long: Putative 3-methyladenine DNA glycosylase (193 aa).

This sequence belongs to the DNA glycosylase MPG family.

In Nitrosospira multiformis (strain ATCC 25196 / NCIMB 11849 / C 71), this protein is Putative 3-methyladenine DNA glycosylase.